Here is a 1088-residue protein sequence, read N- to C-terminus: Calcium-transporting ATPase 5, plasma membrane-type (1088 aa).

Low complexity predominate over residues 1-11 (MESASSSLATS). Residues 1-32 (MESASSSLATSGRRRSSSGGGGGSWGSIGSAA) form a disordered region. At 1–198 (MESASSSLAT…FLWDACKDLT (198 aa)) the chain is on the cytoplasmic side. The helical transmembrane segment at 199–219 (LIILMVAAAVSLALGITTEGI) threads the bilayer. The Extracellular segment spans residues 220-221 (KE). Residues 222 to 242 (GWYDGASIAFAVLLVVVVTAT) traverse the membrane as a helical segment. Residues 243-338 (SDYKQSLQFQ…MSGCKVADGY (96 aa)) lie on the Cytoplasmic side of the membrane. A helical membrane pass occupies residues 339-359 (GTMLVTAVGINTEWGLLMASI). The Extracellular portion of the chain corresponds to 360–375 (SEDSGEETPLQVRLNG). Residues 376–396 (VATFIGMVGLSVALAVLVVLL) form a helical membrane-spanning segment. Residues 397 to 425 (ARYFTGHTYNPDGSVQYVKGKMGVGQTIR) are Cytoplasmic-facing. The chain crosses the membrane as a helical span at residues 426-446 (GIVGIFTVAVTIVVVAVPEGL). Topologically, residues 447–851 (PLAVTLTLAF…GRSVYANIQK (405 aa)) are extracellular. Asp486 functions as the 4-aspartylphosphate intermediate in the catalytic mechanism. 3 N-linked (GlcNAc...) asparagine glycosylation sites follow: Asn532, Asn569, and Asn737. Residues Asp794 and Asp798 each contribute to the Mg(2+) site. The chain crosses the membrane as a helical span at residues 852 to 872 (FIQFQLTVNVAALIINVVAAV). Topologically, residues 873-880 (SSGNVPLN) are cytoplasmic. Residues 881–901 (AVQLLWVNLIMDTLGALALAT) traverse the membrane as a helical segment. At 902-919 (EPPTDHLMQRPPVGRREP) the chain is on the extracellular side. Residues 920–940 (LITNVMWRNLIIMALFQVIVL) traverse the membrane as a helical segment. Topologically, residues 941–1000 (LTLNFRGTSLLQLKNDNQAHADKVKNTFIFNTFVLCQVFNEFNARKPDELNIFKGITGNH) are cytoplasmic. The chain crosses the membrane as a helical span at residues 1001-1021 (LFMAIVAITVVLQALIVEFLG). Residues 1022 to 1030 (KFTSTTRLT) are Extracellular-facing. A helical membrane pass occupies residues 1031–1051 (WQLWLVSIGLAFFSWPLAFVG). Residues 1052–1088 (KLIPVPERPLGDFFACCCPGSKQAADAKGDDADHSDV) are Cytoplasmic-facing.

Belongs to the cation transport ATPase (P-type) (TC 3.A.3) family. Type IIB subfamily. In terms of assembly, interacts with NOH1.

It localises to the cell membrane. The catalysed reaction is Ca(2+)(in) + ATP + H2O = Ca(2+)(out) + ADP + phosphate + H(+). Activated by calmodulin. In terms of biological role, this magnesium-dependent enzyme catalyzes the hydrolysis of ATP coupled with the translocation of calcium from the cytosol out of the cell, into the endoplasmic reticulum, or into organelles. Involved in salt and drought stress tolerance. Involved in cold stress tolerance. The polypeptide is Calcium-transporting ATPase 5, plasma membrane-type (Oryza sativa subsp. japonica (Rice)).